The chain runs to 279 residues: Threonylcarbamoyl-AMP synthase (279 aa).

The transit peptide at 1–55 directs the protein to the mitochondrion; that stretch reads MSPARRCRGMRAAVAASVGLSEGPAGSRSGRLFRPPSPAPAAPGARLLRLPGSGA. Positions 21–41 are disordered; sequence SEGPAGSRSGRLFRPPSPAPA. S60 is modified (phosphoserine). Residues 67–257 enclose the YrdC-like domain; that stretch reads TEALRAAVAE…KFGIIRPGCA (191 aa).

The protein belongs to the SUA5 family. Interacts with RSC1A1. In terms of tissue distribution, ubiquitously expressed.

It localises to the cytoplasm. The protein resides in the mitochondrion. Its subcellular location is the cell membrane. It catalyses the reaction L-threonine + hydrogencarbonate + ATP = L-threonylcarbamoyladenylate + diphosphate + H2O. In terms of biological role, cytoplasmic and mitochondrial threonylcarbamoyl-AMP synthase required for the formation of a threonylcarbamoyl group on adenosine at position 37 (t(6)A37) in tRNAs that read codons beginning with adenine. Catalyzes the conversion of L-threonine, HCO(3)(-)/CO(2) and ATP to give threonylcarbamoyl-AMP (TC-AMP) as the acyladenylate intermediate, with the release of diphosphate. Participates in t(6)A37 formation in cytoplasmic and mitochondrial tRNAs. May regulate the activity of some transporters. In Homo sapiens (Human), this protein is Threonylcarbamoyl-AMP synthase.